Reading from the N-terminus, the 201-residue chain is Small ribosomal subunit protein uS4c (201 aa).

The tract at residues 15-45 (LGDLPGLSRKAIKRSYPPGEHGQKSRKPSEY) is disordered. Residues 35-45 (HGQKSRKPSEY) are compositionally biased toward basic and acidic residues. The S4 RNA-binding domain occupies 90–153 (MRLDNTVFRL…ASRKLVENYL (64 aa)).

The protein belongs to the universal ribosomal protein uS4 family. Part of the 30S ribosomal subunit. Contacts protein S5. The interaction surface between S4 and S5 is involved in control of translational fidelity.

It localises to the plastid. It is found in the chloroplast. Its function is as follows. One of the primary rRNA binding proteins, it binds directly to 16S rRNA where it nucleates assembly of the body of the 30S subunit. Functionally, with S5 and S12 plays an important role in translational accuracy. The sequence is that of Small ribosomal subunit protein uS4c (rps4) from Pyropia yezoensis (Susabi-nori).